The chain runs to 398 residues: Elongation factor Tu (398 aa).

Positions 10–207 constitute a tr-type G domain; that stretch reads KPHVNIGTIG…TVDEYIPEPE (198 aa). The segment at 19–26 is G1; that stretch reads GHVDHGKT. Position 19–26 (19–26) interacts with GTP; that stretch reads GHVDHGKT. A Mg(2+)-binding site is contributed by Thr-26. The G2 stretch occupies residues 63 to 67; that stretch reads GITIN. The G3 stretch occupies residues 84–87; that stretch reads DAPG. GTP is bound by residues 84–88 and 139–142; these read DAPGH and NKVD. The interval 139 to 142 is G4; sequence NKVD. Residues 177 to 179 are G5; sequence SAL.

The protein belongs to the TRAFAC class translation factor GTPase superfamily. Classic translation factor GTPase family. EF-Tu/EF-1A subfamily. In terms of assembly, monomer.

The protein localises to the cytoplasm. It catalyses the reaction GTP + H2O = GDP + phosphate + H(+). In terms of biological role, GTP hydrolase that promotes the GTP-dependent binding of aminoacyl-tRNA to the A-site of ribosomes during protein biosynthesis. The protein is Elongation factor Tu of Streptococcus suis (strain 98HAH33).